Reading from the N-terminus, the 341-residue chain is S-adenosylmethionine:tRNA ribosyltransferase-isomerase (341 aa).

This sequence belongs to the QueA family. Monomer.

The protein localises to the cytoplasm. It carries out the reaction 7-aminomethyl-7-carbaguanosine(34) in tRNA + S-adenosyl-L-methionine = epoxyqueuosine(34) in tRNA + adenine + L-methionine + 2 H(+). It participates in tRNA modification; tRNA-queuosine biosynthesis. Transfers and isomerizes the ribose moiety from AdoMet to the 7-aminomethyl group of 7-deazaguanine (preQ1-tRNA) to give epoxyqueuosine (oQ-tRNA). The sequence is that of S-adenosylmethionine:tRNA ribosyltransferase-isomerase from Pelodictyon phaeoclathratiforme (strain DSM 5477 / BU-1).